A 346-amino-acid polypeptide reads, in one-letter code: MALDRYAALHVSTPQGRGDGRPTADQVLRDQDPLGSHWSDKVILITGGTAGLGAESARVLHKTGAKIFIMGRDIAKGEKVAADISASNPDYPPIEVIQMDQSRLESVREGAVEFLKRSGGKLNVLMANAGIVASPVKETQDGFEAVFAINYLSTFLLVQLLAPALVASTTPEYNSRLVVVSSAGHRASNIDPDKYNLVGEGYDPSKAYARSKTASILMANEFERRYGDRGVHALSLNPGIIMDTEISRGLPGTSASRREQYYKMEPLLAQYEKDVMQGAATQVWATVAKELEGKGGLYLDDVQVAREATHEGQFCRPGWKPWIWNEDNAVRLWKDSLNMVGLESEN.

Positions 11–33 are disordered; it reads VSTPQGRGDGRPTADQVLRDQDP. A compositionally biased stretch (basic and acidic residues) spans 18–32; the sequence is GDGRPTADQVLRDQD. Positions 52, 76, 100, and 128 each coordinate NADP(+). The active-site Proton donor is serine 181. NADP(+)-binding residues include tyrosine 208, lysine 212, and isoleucine 241. Catalysis depends on tyrosine 208, which acts as the Proton acceptor. The Lowers pKa of active site Tyr role is filled by lysine 212.

This sequence belongs to the short-chain dehydrogenases/reductases (SDR) family.

It functions in the pathway secondary metabolite biosynthesis. Oxidoreductase; part of the gene cluster that mediates the biosynthesis of calbistrin A and related compounds. Calbistrin A is a secondary metabolite with an interesting structure that was recently found to have bioactivity against leukemia cells. It consists of two polyketides linked by an ester bond: a bicyclic decalin containing polyketide and a linear 12 carbon dioic acid structure. The polyketide synthase calA is probably responsible for forming the decalin moiety. Because calA lacks a designated enoylreductase (ER) domain, the required activity is provided by the trans-enoyl reductase calK. Following release from the PKS, calF then probably catalyzes the oxidation and the subsequent Diels Alder cycloisomerization that lead to the formation of the decalin moiety. The decalin polyketide backbone includes two C-methyl groups, at C7 and C11 in backbone, of which the C7 position is probably methylated by the methyltransferase domain of calA. A candidate for adding the methyl group at C11, if not done by CalA, is the cluster methyltransferase calH. Several additional tailoring enzymes within the cluster could be involved in the modification of the decalin polyketide product. Those include the 3 cytochrome P450 monooxygenases CalE, CalG and CalL, of which one might be responsible for the introduction of the extra hydroxyl group attached to the backbone of the decalin moiety, at position C9 in the backbone, that allows for attachment of the linear moiety. One tailoring enzyme activity that is expected to be involved in biosynthesis of calbistrin is an acyltransferase for connecting the two polyketide synthase products, and which could be performed by the cluster acyltransferase calJ. The enzyme responsible for the biosynthesis of the linear moiety, probably a second PKS, has not been identified yet. The sequence is that of Oxidoreductase calI from Penicillium decumbens.